The sequence spans 133 residues: Peptidyl-prolyl cis-trans isomerase PIN4 (133 aa).

The span at 1–29 shows a compositional bias: basic and acidic residues; it reads MGKNDKKGADKGGKAKGGDKGKDAKDTKD. The disordered stretch occupies residues 1 to 42; sequence MGKNDKKGADKGGKAKGGDKGKDAKDTKDSGSGGKAKGAQSI. The PpiC domain occupies 39-131; it reads AQSINVRHIL…FGYHIIMVEG (93 aa).

The protein belongs to the PpiC/parvulin rotamase family. PIN4 subfamily.

The catalysed reaction is [protein]-peptidylproline (omega=180) = [protein]-peptidylproline (omega=0). PPIases accelerate the folding of proteins. It catalyzes the cis-trans isomerization of proline imidic peptide bonds in oligopeptides. The protein is Peptidyl-prolyl cis-trans isomerase PIN4 (PIN4) of Gibberella zeae (strain ATCC MYA-4620 / CBS 123657 / FGSC 9075 / NRRL 31084 / PH-1) (Wheat head blight fungus).